The chain runs to 203 residues: Pyridoxal 5'-phosphate synthase subunit PdxT (203 aa).

L-glutamine is bound at residue 49-51 (GES). C81 acts as the Nucleophile in catalysis. L-glutamine contacts are provided by residues R110 and 139 to 140 (IR). Catalysis depends on charge relay system residues H175 and E177.

It belongs to the glutaminase PdxT/SNO family. In the presence of PdxS, forms a dodecamer of heterodimers. Only shows activity in the heterodimer.

It carries out the reaction aldehydo-D-ribose 5-phosphate + D-glyceraldehyde 3-phosphate + L-glutamine = pyridoxal 5'-phosphate + L-glutamate + phosphate + 3 H2O + H(+). It catalyses the reaction L-glutamine + H2O = L-glutamate + NH4(+). The protein operates within cofactor biosynthesis; pyridoxal 5'-phosphate biosynthesis. In terms of biological role, catalyzes the hydrolysis of glutamine to glutamate and ammonia as part of the biosynthesis of pyridoxal 5'-phosphate. The resulting ammonia molecule is channeled to the active site of PdxS. This chain is Pyridoxal 5'-phosphate synthase subunit PdxT, found in Parafrankia sp. (strain EAN1pec).